A 147-amino-acid polypeptide reads, in one-letter code: Endoribonuclease YbeY (147 aa).

The Zn(2+) site is built by His-107, His-111, and His-117.

It belongs to the endoribonuclease YbeY family. Zn(2+) is required as a cofactor.

The protein localises to the cytoplasm. Single strand-specific metallo-endoribonuclease involved in late-stage 70S ribosome quality control and in maturation of the 3' terminus of the 16S rRNA. This chain is Endoribonuclease YbeY, found in Solibacter usitatus (strain Ellin6076).